Reading from the N-terminus, the 573-residue chain is MLFIDFCKILDKIEKTTKRLEKTDYFVELIDFIKTNGKPENLKQVSQITIGRVFAEFENKEIGIGPNLLLEAVKTTGISEKDLKSKIKETGDIGIAVENLSSNIKQVSLFSQALTLEEVYSTLKKLSEIEGNSSQKKKTRIISNLLILATPVESRYISRLILEDMRIGMNIPTILASFSNYFNINKETVEKIYAVTNDIGLLGEKLISGSNIENDSELQLKVFRPIKPMLAQLTPSIEAAIIETKMPQFETKYDGARVQVHKSDGNVKIYSRRLENITNSVPELVEEIKKIDIDNIILEGECVAMDLSSGKPRPFQDILRRFRRKYDIDKMAEKIALRIYFFDVLYYEKGLIDTPLKDRREILEKLFGTNNWDTELSKIEKEIFSNKMLFSSFKLNSDDPILAKEFFNWSLSIGHEGIMIKNPDAPYTPGSRVKTMYKVKPTLENLDVVVTRAKIGMGKRKDWYGSYEISVKDYEDNLHVIGNVGTGLTEDDLEKLTKIVNEIKIEDLGEEVILEPKIVLEVTYEEIQTSEKYEMGYALRFPRVVQIREDKSINDINTLDDVKKIYEIERNRK.

Residue Glu250 participates in ATP binding. The active-site N6-AMP-lysine intermediate is Lys252. ATP contacts are provided by Arg257, Arg272, Glu301, Phe342, Arg432, and Lys438.

It belongs to the ATP-dependent DNA ligase family. Mg(2+) is required as a cofactor.

It carries out the reaction ATP + (deoxyribonucleotide)n-3'-hydroxyl + 5'-phospho-(deoxyribonucleotide)m = (deoxyribonucleotide)n+m + AMP + diphosphate.. In terms of biological role, DNA ligase that seals nicks in double-stranded DNA during DNA replication, DNA recombination and DNA repair. This chain is DNA ligase, found in Methanococcus maripaludis (strain C7 / ATCC BAA-1331).